The chain runs to 372 residues: tRNA-specific 2-thiouridylase MnmA (372 aa).

ATP is bound by residues 9 to 16 (GMSGGVDS) and Met-35. The interaction with target base in tRNA stretch occupies residues 95 to 97 (NPD). Cys-100 acts as the Nucleophile in catalysis. The cysteines at positions 100 and 201 are disulfide-linked. Gly-124 is an ATP binding site. The interaction with tRNA stretch occupies residues 151–153 (KDQ). Catalysis depends on Cys-201, which acts as the Cysteine persulfide intermediate. The interval 317–318 (RY) is interaction with tRNA.

This sequence belongs to the MnmA/TRMU family.

It is found in the cytoplasm. It catalyses the reaction S-sulfanyl-L-cysteinyl-[protein] + uridine(34) in tRNA + AH2 + ATP = 2-thiouridine(34) in tRNA + L-cysteinyl-[protein] + A + AMP + diphosphate + H(+). In terms of biological role, catalyzes the 2-thiolation of uridine at the wobble position (U34) of tRNA, leading to the formation of s(2)U34. The chain is tRNA-specific 2-thiouridylase MnmA from Janthinobacterium sp. (strain Marseille) (Minibacterium massiliensis).